The sequence spans 152 residues: Large ribosomal subunit protein bL9 (152 aa).

Belongs to the bacterial ribosomal protein bL9 family.

Its function is as follows. Binds to the 23S rRNA. This is Large ribosomal subunit protein bL9 from Synechocystis sp. (strain ATCC 27184 / PCC 6803 / Kazusa).